The sequence spans 279 residues: Large ribosomal subunit protein uL2 (279 aa).

The segment at 223–279 is disordered; sequence VVMNPVDHPHGGGEGRTSGGRHPVTPWGKPTKGKRTRSNKKTDSLIMRSRHLAKKKR. Residues 270–279 are compositionally biased toward basic residues; that stretch reads RSRHLAKKKR.

Belongs to the universal ribosomal protein uL2 family. Part of the 50S ribosomal subunit. Forms a bridge to the 30S subunit in the 70S ribosome.

In terms of biological role, one of the primary rRNA binding proteins. Required for association of the 30S and 50S subunits to form the 70S ribosome, for tRNA binding and peptide bond formation. It has been suggested to have peptidyltransferase activity; this is somewhat controversial. Makes several contacts with the 16S rRNA in the 70S ribosome. This chain is Large ribosomal subunit protein uL2, found in Rhodospirillum rubrum (strain ATCC 11170 / ATH 1.1.1 / DSM 467 / LMG 4362 / NCIMB 8255 / S1).